Here is a 192-residue protein sequence, read N- to C-terminus: Ion-translocating oxidoreductase complex subunit A (192 aa).

6 consecutive transmembrane segments (helical) span residues 5–25 (LLLL…FLGL), 39–59 (IGMG…AYLV), 63–83 (ILTP…VIAV), 102–122 (LLGI…VALL), 134–154 (IIYG…FAAM), and 171–191 (SIAM…TGLV).

The protein belongs to the NqrDE/RnfAE family. In terms of assembly, the complex is composed of six subunits: RnfA, RnfB, RnfC, RnfD, RnfE and RnfG.

It is found in the cell inner membrane. In terms of biological role, part of a membrane-bound complex that couples electron transfer with translocation of ions across the membrane. The chain is Ion-translocating oxidoreductase complex subunit A from Vibrio atlanticus (strain LGP32) (Vibrio splendidus (strain Mel32)).